Reading from the N-terminus, the 123-residue chain is UPF0102 protein CLK_1817 (123 aa).

Belongs to the UPF0102 family.

This Clostridium botulinum (strain Loch Maree / Type A3) protein is UPF0102 protein CLK_1817.